Reading from the N-terminus, the 487-residue chain is UPF0324 membrane protein NE0724 (487 aa).

Transmembrane regions (helical) follow at residues 19-38, 71-93, 100-119, 139-161, 181-200, 204-226, 269-291, 350-369, 389-411, 426-443, and 456-478; these read WAVW…LWGW, PALS…AWSM, FFIG…IIGN, LSLG…GNFF, AIVF…AGFI, VMTG…YALG, VSIL…YTAI, IWID…VWVY, FPKF…SSGS, GPMR…IGII, and ALLY…AWIF.

This sequence belongs to the UPF0324 family.

The protein resides in the cell membrane. In Nitrosomonas europaea (strain ATCC 19718 / CIP 103999 / KCTC 2705 / NBRC 14298), this protein is UPF0324 membrane protein NE0724.